Reading from the N-terminus, the 232-residue chain is Clarin-2 (232 aa).

The next 4 helical transmembrane spans lie at 8 to 28, 101 to 121, 139 to 159, and 188 to 208; these read VWYG…IVAL, ILLL…FAIL, LWNV…MAAV, and SFWI…VVAI.

This sequence belongs to the clarin family. Detected in inner ear, particularly in hair bundles of auditory hair cells and is enriched in apical stereocilia. Detected in eye, but not in brain or muscle.

The protein localises to the cell projection. It localises to the stereocilium membrane. Plays a key role to hearing function. Required for normal organization and maintenance of the stereocilia bundle and for mechano-electrical transduction. The protein is Clarin-2 of Mus musculus (Mouse).